A 246-amino-acid polypeptide reads, in one-letter code: tRNA pseudouridine synthase A (246 aa).

Residue D52 is the Nucleophile of the active site. Y111 is a substrate binding site.

This sequence belongs to the tRNA pseudouridine synthase TruA family. As to quaternary structure, homodimer.

It catalyses the reaction uridine(38/39/40) in tRNA = pseudouridine(38/39/40) in tRNA. Functionally, formation of pseudouridine at positions 38, 39 and 40 in the anticodon stem and loop of transfer RNAs. The sequence is that of tRNA pseudouridine synthase A from Rhodopseudomonas palustris (strain BisA53).